Consider the following 199-residue polypeptide: MNNLSQIEALLFVSGDEGISVKNMSIITGFDRSAIQGLLEELVLKYDTDLSSALQIRESDDVYRLVTKPELGGTVKQYFDSPVNATLSQAQLETLVIVAYKQPITRVEIDTIRGVQSSGTLQKLALRQLVHEVGRKDEPGRPIMFGTTDEFLDYFGLKSIEELPPLPDFNMLDLGDDIDGELFTSAFDVHQSESEKENV.

This sequence belongs to the ScpB family. As to quaternary structure, homodimer. Homodimerization may be required to stabilize the binding of ScpA to the Smc head domains. Component of a cohesin-like complex composed of ScpA, ScpB and the Smc homodimer, in which ScpA and ScpB bind to the head domain of Smc. The presence of the three proteins is required for the association of the complex with DNA.

The protein resides in the cytoplasm. In terms of biological role, participates in chromosomal partition during cell division. May act via the formation of a condensin-like complex containing Smc and ScpA that pull DNA away from mid-cell into both cell halves. The sequence is that of Segregation and condensation protein B from Leuconostoc mesenteroides subsp. mesenteroides (strain ATCC 8293 / DSM 20343 / BCRC 11652 / CCM 1803 / JCM 6124 / NCDO 523 / NBRC 100496 / NCIMB 8023 / NCTC 12954 / NRRL B-1118 / 37Y).